The following is a 134-amino-acid chain: U-scoloptoxin(05)-Er2a (134 aa).

The first 19 residues, 1–19, serve as a signal peptide directing secretion; sequence MTFVVAAVVLLTVVPLATP.

The protein belongs to the scoloptoxin-05 family. Contains 5 disulfide bonds. As to expression, expressed by the venom gland.

The protein localises to the secreted. The chain is U-scoloptoxin(05)-Er2a from Ethmostigmus rubripes (Giant centipede).